Consider the following 874-residue polypeptide: Alanine--tRNA ligase (874 aa).

Residues histidine 559, histidine 563, cysteine 661, and histidine 665 each coordinate Zn(2+).

This sequence belongs to the class-II aminoacyl-tRNA synthetase family. Zn(2+) is required as a cofactor.

Its subcellular location is the cytoplasm. It catalyses the reaction tRNA(Ala) + L-alanine + ATP = L-alanyl-tRNA(Ala) + AMP + diphosphate. Catalyzes the attachment of alanine to tRNA(Ala) in a two-step reaction: alanine is first activated by ATP to form Ala-AMP and then transferred to the acceptor end of tRNA(Ala). Also edits incorrectly charged Ser-tRNA(Ala) and Gly-tRNA(Ala) via its editing domain. This is Alanine--tRNA ligase from Microcystis aeruginosa (strain NIES-843 / IAM M-2473).